The primary structure comprises 176 residues: Cytochrome b (176 aa).

Helical transmembrane passes span 33 to 53 (FGSL…FLAM), 77 to 98 (WLLR…YLHI), and 113 to 133 (WNVG…GYVL). Histidine 83 and histidine 97 together coordinate heme b.

The protein belongs to the cytochrome b family. The cytochrome bc1 complex contains 11 subunits: 3 respiratory subunits (MT-CYB, CYC1 and UQCRFS1), 2 core proteins (UQCRC1 and UQCRC2) and 6 low-molecular weight proteins (UQCRH/QCR6, UQCRB/QCR7, UQCRQ/QCR8, UQCR10/QCR9, UQCR11/QCR10 and a cleavage product of UQCRFS1). This cytochrome bc1 complex then forms a dimer. Requires heme b as cofactor.

The protein resides in the mitochondrion inner membrane. In terms of biological role, component of the ubiquinol-cytochrome c reductase complex (complex III or cytochrome b-c1 complex) that is part of the mitochondrial respiratory chain. The b-c1 complex mediates electron transfer from ubiquinol to cytochrome c. Contributes to the generation of a proton gradient across the mitochondrial membrane that is then used for ATP synthesis. The protein is Cytochrome b (MT-CYB) of Eumops glaucinus (Wagner's mastiff bat).